We begin with the raw amino-acid sequence, 501 residues long: Armadillo repeat-containing protein 6 (501 aa).

Ser-64 carries the post-translational modification Phosphoserine. 4 ARM repeats span residues 220–264 (GVLP…HAHN), 274–318 (KGLK…DLGG), 319–369 (LSIL…RAGG), and 370–412 (TESI…VEGG). His-263 is subject to Pros-methylhistidine.

Belongs to the ARMC6 family. In terms of processing, methylated at His-263 by METTL9.

In Homo sapiens (Human), this protein is Armadillo repeat-containing protein 6 (ARMC6).